Here is a 320-residue protein sequence, read N- to C-terminus: Holliday junction branch migration complex subunit RuvB (320 aa).

The interval 1–172 (MTANVCLDES…FGIISRLEYY (172 aa)) is large ATPase domain (RuvB-L). ATP is bound by residues R12, G53, K56, T57, T58, 119–121 (EDF), R162, Y172, and R209. T57 provides a ligand contact to Mg(2+). The small ATPAse domain (RuvB-S) stretch occupies residues 173–243 (TPADLARIVA…LASEALGRME (71 aa)). Positions 246–320 (ESGLDQMDRK…KAYRHLNLLG (75 aa)) are head domain (RuvB-H). The DNA site is built by R301 and R306.

It belongs to the RuvB family. Homohexamer. Forms an RuvA(8)-RuvB(12)-Holliday junction (HJ) complex. HJ DNA is sandwiched between 2 RuvA tetramers; dsDNA enters through RuvA and exits via RuvB. An RuvB hexamer assembles on each DNA strand where it exits the tetramer. Each RuvB hexamer is contacted by two RuvA subunits (via domain III) on 2 adjacent RuvB subunits; this complex drives branch migration. In the full resolvosome a probable DNA-RuvA(4)-RuvB(12)-RuvC(2) complex forms which resolves the HJ.

The protein localises to the cytoplasm. It catalyses the reaction ATP + H2O = ADP + phosphate + H(+). In terms of biological role, the RuvA-RuvB-RuvC complex processes Holliday junction (HJ) DNA during genetic recombination and DNA repair, while the RuvA-RuvB complex plays an important role in the rescue of blocked DNA replication forks via replication fork reversal (RFR). RuvA specifically binds to HJ cruciform DNA, conferring on it an open structure. The RuvB hexamer acts as an ATP-dependent pump, pulling dsDNA into and through the RuvAB complex. RuvB forms 2 homohexamers on either side of HJ DNA bound by 1 or 2 RuvA tetramers; 4 subunits per hexamer contact DNA at a time. Coordinated motions by a converter formed by DNA-disengaged RuvB subunits stimulates ATP hydrolysis and nucleotide exchange. Immobilization of the converter enables RuvB to convert the ATP-contained energy into a lever motion, pulling 2 nucleotides of DNA out of the RuvA tetramer per ATP hydrolyzed, thus driving DNA branch migration. The RuvB motors rotate together with the DNA substrate, which together with the progressing nucleotide cycle form the mechanistic basis for DNA recombination by continuous HJ branch migration. Branch migration allows RuvC to scan DNA until it finds its consensus sequence, where it cleaves and resolves cruciform DNA. In Nitratidesulfovibrio vulgaris (strain ATCC 29579 / DSM 644 / CCUG 34227 / NCIMB 8303 / VKM B-1760 / Hildenborough) (Desulfovibrio vulgaris), this protein is Holliday junction branch migration complex subunit RuvB.